A 910-amino-acid chain; its full sequence is DnaJ-like protein MG200 homolog (910 aa).

Residues 4–73 (AKRDYYEVLG…RANYDKYGHD (70 aa)) enclose the J domain. Disordered stretches follow at residues 102–160 (DNLS…DDIP), 260–408 (TEPS…LEQD), and 451–486 (VLSDQNPNPQTPTHHEEDAAAPEPTVDETSGESTAP). Positions 111–121 (KKEKTKTKKKG) are enriched in basic residues. Residues 273–283 (DSDAVTAATTV) show a composition bias toward low complexity. Residues 357–379 (SDEADATNEPTEQDTISEPEQET) show a composition bias toward acidic residues. A compositionally biased stretch (polar residues) spans 451–462 (VLSDQNPNPQTP).

The sequence is that of DnaJ-like protein MG200 homolog from Mycoplasma pneumoniae (strain ATCC 29342 / M129 / Subtype 1) (Mycoplasmoides pneumoniae).